Consider the following 383-residue polypeptide: tRNA (guanine-N(7)-)-methyltransferase non-catalytic subunit wuho (383 aa).

WD repeat units follow at residues 61-101, 105-144, 148-187, 191-231, and 289-329; these read NLEV…ALLL, ALARASSALAFAPDSSSVLVTDKTGDCYQYDCVEVEAPPK, GHLSIVYDIVWTPDLKHIITCDRDDKIRVTNYPATHDIHS, GHKE…EVLQ, and AGSW…QAES.

Belongs to the WD repeat TRM82 family. Forms a heterodimer with the catalytic subunit Mettl1. Interacts with mei-P26 and weakly interacts with bgcn; required for the function or formation of the mei-P26-bgcn-bam-sxl complex. Interacts with nanos; may be involved in mei-P26-dependent derepression of the BMP signaling pathway. Interacts with Myc; the interaction may be mediated by mei-P26 and may be involved in the regulation of ribosome biogenesis. As to expression, in testis, it is present at high level in hub cells, a niche for germline stem cells of testis. Ubiquitously expressed in all testicular cells throughout spermatogenesis. Ubiquitously expressed in all germline and somatic cells of the ovary.

It is found in the nucleus. The protein localises to the cytoplasm. It functions in the pathway tRNA modification; N(7)-methylguanine-tRNA biosynthesis. Required for the Mettl1-dependent formation of N(7)-methylguanine at position 46 (m7G46) in tRNA. In the Mettl1-wuho methyltransferase complex, it is required to stabilize and induce conformational changes of the catalytic subunit. Required for binding of nanos mRNA and repression of translation by the mei-P26-bgcn-bam-sxl complex. May cooperate with mei-P26 and nanos to derepress the BMP signaling pathway. May cooperate with mei-P26 to suppress expression of a subset of microRNAs. May cooperate with mei-P26 to regulate bam expression levels in germline cells during gametogenesis. Required to promote mitosis to meiosis transition during gametogenesis. May regulate germline cell division in part by regulating ribosome biogenesis. The sequence is that of tRNA (guanine-N(7)-)-methyltransferase non-catalytic subunit wuho from Drosophila mojavensis (Fruit fly).